The following is a 607-amino-acid chain: Phosphogluconate dehydratase (607 aa).

[4Fe-4S] cluster contacts are provided by C156 and C223.

It belongs to the IlvD/Edd family. [4Fe-4S] cluster serves as cofactor.

The catalysed reaction is 6-phospho-D-gluconate = 2-dehydro-3-deoxy-6-phospho-D-gluconate + H2O. Its pathway is carbohydrate metabolism; Entner-Doudoroff pathway. Catalyzes the dehydration of 6-phospho-D-gluconate to 2-dehydro-3-deoxy-6-phospho-D-gluconate. The chain is Phosphogluconate dehydratase from Zymomonas mobilis subsp. mobilis (strain ATCC 31821 / ZM4 / CP4).